The following is a 226-amino-acid chain: X-linked lymphocyte-regulated protein 3A (226 aa).

Over residues 1 to 18 the composition is skewed to basic and acidic residues; that stretch reads MSSRERKATDTAGRHSRM. Positions 1–72 are disordered; it reads MSSRERKATD…QDLVQEFEEP (72 aa). Positions 21 to 30 are enriched in polar residues; the sequence is NLSSDDSQNP. 2 stretches are compositionally biased toward basic and acidic residues: residues 39–48 and 56–65; these read EVLDAGREDI and QQARKEKQDL. A coiled-coil region spans residues 155 to 210; the sequence is ETLTLQKNRMEEFKSLCEKYLEKLEVLRDSRGNSIAEELRRLIATLEIKLLMLHNQ.

This sequence belongs to the XLR/SYCP3 family. As to expression, expressed in lymphoid cells.

The protein is X-linked lymphocyte-regulated protein 3A (Xlr3a) of Mus musculus (Mouse).